The sequence spans 166 residues: Phosphopantetheine adenylyltransferase (166 aa).

Ser8 contacts substrate. ATP-binding positions include 8-9 (SF) and His16. 3 residues coordinate substrate: Lys40, Thr72, and Arg86. ATP-binding positions include 87 to 89 (GLR), Glu97, and 122 to 128 (HSFLSSS).

The protein belongs to the bacterial CoaD family. Homohexamer. Mg(2+) is required as a cofactor.

The protein resides in the cytoplasm. The enzyme catalyses (R)-4'-phosphopantetheine + ATP + H(+) = 3'-dephospho-CoA + diphosphate. Its pathway is cofactor biosynthesis; coenzyme A biosynthesis; CoA from (R)-pantothenate: step 4/5. Reversibly transfers an adenylyl group from ATP to 4'-phosphopantetheine, yielding dephospho-CoA (dPCoA) and pyrophosphate. The polypeptide is Phosphopantetheine adenylyltransferase (Synechococcus sp. (strain RCC307)).